The chain runs to 201 residues: UPF0301 protein Bpet0561 (201 aa).

It belongs to the UPF0301 (AlgH) family.

This chain is UPF0301 protein Bpet0561, found in Bordetella petrii (strain ATCC BAA-461 / DSM 12804 / CCUG 43448).